The sequence spans 194 residues: Elongation factor P (194 aa).

The protein belongs to the elongation factor P family.

Its subcellular location is the cytoplasm. It functions in the pathway protein biosynthesis; polypeptide chain elongation. Functionally, involved in peptide bond synthesis. Stimulates efficient translation and peptide-bond synthesis on native or reconstituted 70S ribosomes in vitro. Probably functions indirectly by altering the affinity of the ribosome for aminoacyl-tRNA, thus increasing their reactivity as acceptors for peptidyl transferase. The sequence is that of Elongation factor P from Hydrogenobaculum sp. (strain Y04AAS1).